We begin with the raw amino-acid sequence, 356 residues long: Probable dual-specificity RNA methyltransferase RlmN (356 aa).

Glutamate 100 acts as the Proton acceptor in catalysis. One can recognise a Radical SAM core domain in the interval 106–340; it reads TQQRLTVCLS…VSLRASRGLD (235 aa). Cysteines 113 and 345 form a disulfide. [4Fe-4S] cluster contacts are provided by cysteine 120, cysteine 124, and cysteine 127. Residues 167 to 168, serine 197, 226 to 228, and asparagine 302 contribute to the S-adenosyl-L-methionine site; these read GE and SLH. Cysteine 345 acts as the S-methylcysteine intermediate in catalysis.

It belongs to the radical SAM superfamily. RlmN family. [4Fe-4S] cluster serves as cofactor.

It localises to the cytoplasm. It carries out the reaction adenosine(2503) in 23S rRNA + 2 reduced [2Fe-2S]-[ferredoxin] + 2 S-adenosyl-L-methionine = 2-methyladenosine(2503) in 23S rRNA + 5'-deoxyadenosine + L-methionine + 2 oxidized [2Fe-2S]-[ferredoxin] + S-adenosyl-L-homocysteine. It catalyses the reaction adenosine(37) in tRNA + 2 reduced [2Fe-2S]-[ferredoxin] + 2 S-adenosyl-L-methionine = 2-methyladenosine(37) in tRNA + 5'-deoxyadenosine + L-methionine + 2 oxidized [2Fe-2S]-[ferredoxin] + S-adenosyl-L-homocysteine. In terms of biological role, specifically methylates position 2 of adenine 2503 in 23S rRNA and position 2 of adenine 37 in tRNAs. The sequence is that of Probable dual-specificity RNA methyltransferase RlmN from Prochlorococcus marinus (strain MIT 9303).